Reading from the N-terminus, the 116-residue chain is Small ribosomal subunit protein uS13 (116 aa).

The interval 88–116 (GSRHKKGLPVRGQHTKNNARTRKGPRKQA) is disordered.

It belongs to the universal ribosomal protein uS13 family. As to quaternary structure, part of the 30S ribosomal subunit. Forms a loose heterodimer with protein S19. Forms two bridges to the 50S subunit in the 70S ribosome.

Located at the top of the head of the 30S subunit, it contacts several helices of the 16S rRNA. In the 70S ribosome it contacts the 23S rRNA (bridge B1a) and protein L5 of the 50S subunit (bridge B1b), connecting the 2 subunits; these bridges are implicated in subunit movement. Contacts the tRNAs in the A and P-sites. This Finegoldia magna (strain ATCC 29328 / DSM 20472 / WAL 2508) (Peptostreptococcus magnus) protein is Small ribosomal subunit protein uS13.